The chain runs to 1336 residues: DNA-directed RNA polymerase subunit beta' (1336 aa).

Zn(2+) contacts are provided by cysteine 60, cysteine 62, cysteine 75, and cysteine 78. Aspartate 535, aspartate 537, and aspartate 539 together coordinate Mg(2+). Zn(2+) contacts are provided by cysteine 902, cysteine 984, cysteine 991, and cysteine 994.

The protein belongs to the RNA polymerase beta' chain family. As to quaternary structure, the RNAP catalytic core consists of 2 alpha, 1 beta, 1 beta' and 1 omega subunit. When a sigma factor is associated with the core the holoenzyme is formed, which can initiate transcription. Requires Mg(2+) as cofactor. Zn(2+) serves as cofactor.

The catalysed reaction is RNA(n) + a ribonucleoside 5'-triphosphate = RNA(n+1) + diphosphate. DNA-dependent RNA polymerase catalyzes the transcription of DNA into RNA using the four ribonucleoside triphosphates as substrates. The polypeptide is DNA-directed RNA polymerase subunit beta' (Corynebacterium diphtheriae (strain ATCC 700971 / NCTC 13129 / Biotype gravis)).